Here is a 345-residue protein sequence, read N- to C-terminus: Platelet-derived growth factor C (345 aa).

Positions 1-22 (MLLLGLLLLTSALAGQRTGTRA) are cleaved as a signal peptide. The span at 24–33 (SNLSSKLQLS) shows a compositional bias: polar residues. Residues 24–45 (SNLSSKLQLSSDKEQNGVQDPR) form a disordered region. Asparagine 25 is a glycosylation site (N-linked (GlcNAc...) asparagine). The segment covering 34 to 45 (SDKEQNGVQDPR) has biased composition (basic and acidic residues). Residues 46–163 (HERVVTISGN…PGFCIHYSII (118 aa)) form the CUB domain. An N-linked (GlcNAc...) asparagine glycan is attached at asparagine 55. 4 disulfide bridges follow: cysteine 104–cysteine 124, cysteine 250–cysteine 294, cysteine 280–cysteine 335, and cysteine 287–cysteine 337.

It belongs to the PDGF/VEGF growth factor family. As to quaternary structure, homodimer; disulfide-linked. Interacts with PDGFRA homodimers, and with heterodimers formed by PDGFRA and PDGFRB. Interacts (via CUB domain) with PLAT (via kringle domain). In terms of processing, proteolytic removal of the N-terminal CUB domain releasing the core domain is necessary for unmasking the receptor-binding epitopes of the core domain. Cleavage after basic residues in the hinge region (region connecting the CUB and growth factor domains) gives rise to the receptor-binding form. Cleaved by PLAT and PLG. Sumoylated with SUMO1. Post-translationally, N-glycosylated. Highly expressed in the kidney and adrenal gland. In the kidney, it is expressed in arteriolar smooth muscle cells and in epithelial cells of individual segments (at protein level).

It localises to the cytoplasm. The protein localises to the cytosol. Its subcellular location is the secreted. The protein resides in the nucleus. It is found in the cytoplasmic granule. It localises to the cell membrane. Its function is as follows. Growth factor that plays an essential role in the regulation of embryonic development, cell proliferation, cell migration, survival and chemotaxis. Potent mitogen and chemoattractant for cells of mesenchymal origin. Required for normal skeleton formation during embryonic development, especially for normal development of the craniofacial skeleton and for normal development of the palate. Required for normal skin morphogenesis during embryonic development. Plays an important role in wound healing, where it appears to be involved in three stages: inflammation, proliferation and remodeling. Plays an important role in angiogenesis and blood vessel development. Involved in fibrotic processes, in which transformation of interstitial fibroblasts into myofibroblasts plus collagen deposition occurs. The CUB domain has mitogenic activity in coronary artery smooth muscle cells, suggesting a role beyond the maintenance of the latency of the PDGF domain. In the nucleus, PDGFC seems to have additional function. This Rattus norvegicus (Rat) protein is Platelet-derived growth factor C (Pdgfc).